Consider the following 254-residue polypeptide: 3-deoxy-manno-octulosonate cytidylyltransferase (254 aa).

The protein belongs to the KdsB family.

Its subcellular location is the cytoplasm. The catalysed reaction is 3-deoxy-alpha-D-manno-oct-2-ulosonate + CTP = CMP-3-deoxy-beta-D-manno-octulosonate + diphosphate. The protein operates within nucleotide-sugar biosynthesis; CMP-3-deoxy-D-manno-octulosonate biosynthesis; CMP-3-deoxy-D-manno-octulosonate from 3-deoxy-D-manno-octulosonate and CTP: step 1/1. It participates in bacterial outer membrane biogenesis; lipopolysaccharide biosynthesis. Functionally, activates KDO (a required 8-carbon sugar) for incorporation into bacterial lipopolysaccharide in Gram-negative bacteria. The chain is 3-deoxy-manno-octulosonate cytidylyltransferase from Nitrobacter winogradskyi (strain ATCC 25391 / DSM 10237 / CIP 104748 / NCIMB 11846 / Nb-255).